The chain runs to 252 residues: uncharacterized protein (252 aa).

The ABC transporter domain maps to 13–247 (ITLENVNKWY…PKSERTRAFL (235 aa)). 45 to 52 (GPSGSGKS) is a binding site for ATP.

It belongs to the ABC transporter superfamily.

It localises to the cell inner membrane. Probably part of a binding-protein-dependent transport system YdhWXYZ for an amino acid. Probably responsible for energy coupling to the transport system. This is an uncharacterized protein from Escherichia coli (strain K12).